The sequence spans 351 residues: Probable aldo-keto reductase 2 (351 aa).

The active-site Proton donor is Y67. H134 is a binding site for substrate. 213-223 serves as a coordination point for NADP(+); sequence SPLGRGFFSAG. Residues 317–351 form a disordered region; sequence YASTDDVRGDRYPQAMANTTWQNSETPPLSSWKAQ. The span at 332–351 shows a compositional bias: polar residues; the sequence is MANTTWQNSETPPLSSWKAQ.

It belongs to the aldo/keto reductase family.

The sequence is that of Probable aldo-keto reductase 2 from Oryza sativa subsp. indica (Rice).